The primary structure comprises 121 residues: MIQQESRLVVADNSGAKEALCIRVLGGTRKRYATVGDVIVVAIKSVIPASDVKKGAVSKAIIVRTKKEIRRPDGSYIRFDDNACVLLNAGGDIRGSRIFGPVARELRATNMKIVSLAPEVL.

This sequence belongs to the universal ribosomal protein uL14 family. Part of the 50S ribosomal subunit. Forms a cluster with proteins L3 and L19. In the 70S ribosome, L14 and L19 interact and together make contacts with the 16S rRNA in bridges B5 and B8.

Its function is as follows. Binds to 23S rRNA. Forms part of two intersubunit bridges in the 70S ribosome. This Parabacteroides distasonis (strain ATCC 8503 / DSM 20701 / CIP 104284 / JCM 5825 / NCTC 11152) protein is Large ribosomal subunit protein uL14.